Here is a 209-residue protein sequence, read N- to C-terminus: Large ribosomal subunit protein uL3 (209 aa).

Gln-150 is subject to N5-methylglutamine.

The protein belongs to the universal ribosomal protein uL3 family. As to quaternary structure, part of the 50S ribosomal subunit. Forms a cluster with proteins L14 and L19. Post-translationally, methylated by PrmB.

One of the primary rRNA binding proteins, it binds directly near the 3'-end of the 23S rRNA, where it nucleates assembly of the 50S subunit. The polypeptide is Large ribosomal subunit protein uL3 (Salmonella paratyphi C (strain RKS4594)).